Consider the following 155-residue polypeptide: HTH-type transcriptional regulator IscR (155 aa).

An HTH rrf2-type domain is found at 2-136 (KLSTKGRYAM…HQTRLSDIIK (135 aa)). Positions 30-53 (LAEVSKRQDISLPYLEQLFVKLRR) form a DNA-binding region, H-T-H motif. The tract at residues 141–145 (PCPAV) is heme regulatory motif (HRM). Cysteine 142 provides a ligand contact to [2Fe-2S] cluster.

[2Fe-2S] cluster is required as a cofactor.

In terms of biological role, regulates the transcription of several operons and genes involved in the biogenesis of Fe-S clusters and Fe-S-containing proteins. Functions as a transcriptional repressor of genes involved in iron metabolism by directly binding to the promoter region of genes preceded by the Iron-Rhodo-box motif. Binds to iscR and hemP promoter regions independently of an Fe-S cluster, but their transcriptional repression is Fe-S cluster-dependent. Seems to activate some target genes in a Fe-S cluster-independent manner. Negatively regulates its own transcription in the presence of iron only. The protein is HTH-type transcriptional regulator IscR of Cereibacter sphaeroides (strain ATCC 17023 / DSM 158 / JCM 6121 / CCUG 31486 / LMG 2827 / NBRC 12203 / NCIMB 8253 / ATH 2.4.1.) (Rhodobacter sphaeroides).